We begin with the raw amino-acid sequence, 59 residues long: UPF0337 protein PP_4561 (59 aa).

Over residues 27-43 the composition is skewed to basic and acidic residues; it reads TDNEKLRAEGKAQELKG. The interval 27–59 is disordered; that stretch reads TDNEKLRAEGKAQELKGEAQQVKGNVKDAVKKP.

This sequence belongs to the UPF0337 (CsbD) family.

The polypeptide is UPF0337 protein PP_4561 (Pseudomonas putida (strain ATCC 47054 / DSM 6125 / CFBP 8728 / NCIMB 11950 / KT2440)).